A 503-amino-acid polypeptide reads, in one-letter code: Maturase K (503 aa).

It belongs to the intron maturase 2 family. MatK subfamily.

Its subcellular location is the plastid. The protein localises to the chloroplast. In terms of biological role, usually encoded in the trnK tRNA gene intron. Probably assists in splicing its own and other chloroplast group II introns. The polypeptide is Maturase K (Panax ginseng (Korean ginseng)).